A 512-amino-acid chain; its full sequence is Glycerol kinase, glycosomal (512 aa).

Substrate is bound at residue threonine 11. Arginine 15 contacts ATP. The substrate site is built by arginine 84, tyrosine 139, and aspartate 254. Residues threonine 276, glycine 321, and 422–426 (GLSKN) contribute to the ATP site. The Microbody targeting signal signature appears at 510 to 512 (AKL).

The protein belongs to the FGGY kinase family.

The protein resides in the glycosome. The enzyme catalyses glycerol + ATP = sn-glycerol 3-phosphate + ADP + H(+). It participates in polyol metabolism; glycerol degradation via glycerol kinase pathway; sn-glycerol 3-phosphate from glycerol: step 1/1. In terms of biological role, catalyzes the phosphorylation of glycerol using ATP. Under anoxic conditions, when glycerol 3-phosphate accumulates in the glycosome, it catalyzes the reverse reaction, maintaining the ATP balance. Key enzyme for the survival of bloodstream forms under anoxic conditions. This Trypanosoma brucei brucei protein is Glycerol kinase, glycosomal (GK).